We begin with the raw amino-acid sequence, 736 residues long: Polyribonucleotide nucleotidyltransferase (736 aa).

Positions 518 and 524 each coordinate Mg(2+). The KH domain occupies 584–644; sequence PSLQIFSINP…QKVEAAKEHI (61 aa). An S1 motif domain is found at 665-732; it reads GEVFKGKVKK…NKNKVELGRA (68 aa).

Belongs to the polyribonucleotide nucleotidyltransferase family. Requires Mg(2+) as cofactor.

It localises to the cytoplasm. It catalyses the reaction RNA(n+1) + phosphate = RNA(n) + a ribonucleoside 5'-diphosphate. Involved in mRNA degradation. Catalyzes the phosphorolysis of single-stranded polyribonucleotides processively in the 3'- to 5'-direction. This is Polyribonucleotide nucleotidyltransferase from Wolinella succinogenes (strain ATCC 29543 / DSM 1740 / CCUG 13145 / JCM 31913 / LMG 7466 / NCTC 11488 / FDC 602W) (Vibrio succinogenes).